A 292-amino-acid chain; its full sequence is Acetylglutamate kinase (292 aa).

Residues 64–65 (GG), arginine 86, and asparagine 190 contribute to the substrate site.

This sequence belongs to the acetylglutamate kinase family. ArgB subfamily.

The protein localises to the cytoplasm. It catalyses the reaction N-acetyl-L-glutamate + ATP = N-acetyl-L-glutamyl 5-phosphate + ADP. It participates in amino-acid biosynthesis; L-arginine biosynthesis; N(2)-acetyl-L-ornithine from L-glutamate: step 2/4. Functionally, catalyzes the ATP-dependent phosphorylation of N-acetyl-L-glutamate. This chain is Acetylglutamate kinase, found in Geotalea daltonii (strain DSM 22248 / JCM 15807 / FRC-32) (Geobacter daltonii).